Here is a 380-residue protein sequence, read N- to C-terminus: Flap endonuclease 1 (380 aa).

Residues 1 to 104 form an N-domain region; it reads MGIHGLTKLI…AELEKRGEKR (104 aa). A Mg(2+)-binding site is contributed by D34. DNA is bound by residues R47 and R70. Mg(2+) contacts are provided by D86, E158, E160, D179, and D181. The segment at 122–253 is I-domain; the sequence is NIDKFSKRLV…KRAIDLIKQH (132 aa). A DNA-binding site is contributed by E158. Residues G231 and D233 each coordinate DNA. Mg(2+) is bound at residue D233. Residues 336 to 344 form an interaction with PCNA region; sequence TQGRLDSFF. Positions 351–380 are disordered; it reads SSKRKEPELKGSAKKKQKTGATPGKFKKGK.

The protein belongs to the XPG/RAD2 endonuclease family. FEN1 subfamily. Interacts with PCNA. Three molecules of fen1 bind to one PCNA trimer with each molecule binding to one PCNA monomer. PCNA stimulates the nuclease activity without altering cleavage specificity. Mg(2+) is required as a cofactor. Post-translationally, phosphorylated. Phosphorylation upon DNA damage induces relocalization to the nuclear plasma.

The protein localises to the nucleus. The protein resides in the nucleolus. It is found in the nucleoplasm. It localises to the mitochondrion. In terms of biological role, structure-specific nuclease with 5'-flap endonuclease and 5'-3' exonuclease activities involved in DNA replication and repair. During DNA replication, cleaves the 5'-overhanging flap structure that is generated by displacement synthesis when DNA polymerase encounters the 5'-end of a downstream Okazaki fragment. It enters the flap from the 5'-end and then tracks to cleave the flap base, leaving a nick for ligation. Also involved in the long patch base excision repair (LP-BER) pathway, by cleaving within the apurinic/apyrimidinic (AP) site-terminated flap. Acts as a genome stabilization factor that prevents flaps from equilibrating into structures that lead to duplications and deletions. Also possesses 5'-3' exonuclease activity on nicked or gapped double-stranded DNA, and exhibits RNase H activity. Also involved in replication and repair of rDNA and in repairing mitochondrial DNA. The protein is Flap endonuclease 1 (fen1) of Anoplopoma fimbria (Sablefish).